The chain runs to 271 residues: Delta(7)-sterol-C5(6)-desaturase (271 aa).

A run of 2 helical transmembrane segments spans residues 44-64 and 120-140; these read IGGV…IYHL and VGWL…EFGI. One can recognise a Fatty acid hydroxylase domain in the interval 130–259; that stretch reads AIYLVIVEFG…TIWMDWMFGT (130 aa). A Histidine box-1 motif is present at residues 144–148; the sequence is HMELH. The short motif at 158 to 162 is the Histidine box-2 element; that stretch reads HATHH. Residues 190 to 210 traverse the membrane as a helical segment; it reads HVVALLLVPMHFSTHIALIFL. The Histidine box-3 signature appears at 235 to 239; it reads HTIHH.

It belongs to the sterol desaturase family. The cofactor is Fe cation.

The protein resides in the endoplasmic reticulum membrane. It carries out the reaction a Delta(7)-sterol + 2 Fe(II)-[cytochrome b5] + O2 + 2 H(+) = a Delta(5),Delta(7)-sterol + 2 Fe(III)-[cytochrome b5] + 2 H2O. Functionally, involved in the biosynthesis of sitosterol and campesterol. In Nicotiana tabacum (Common tobacco), this protein is Delta(7)-sterol-C5(6)-desaturase.